We begin with the raw amino-acid sequence, 54 residues long: Large ribosomal subunit protein bL33 (54 aa).

The protein belongs to the bacterial ribosomal protein bL33 family.

The protein is Large ribosomal subunit protein bL33 of Elusimicrobium minutum (strain Pei191).